A 66-amino-acid polypeptide reads, in one-letter code: Prokaryotic ubiquitin-like protein Pup (66 aa).

Positions 1-10 (MAGQEQQSSS) are enriched in low complexity. The interval 1–39 (MAGQEQQSSSPREEEHEVADAPVPVPSSPQASAHTDGVD) is disordered. The interval 23–60 (VPVPSSPQASAHTDGVDDLLDEIDGVLESNAEEFVRGF) is ARC ATPase binding. Q66 carries the post-translational modification Deamidated glutamine. Q66 is covalently cross-linked (Isoglutamyl lysine isopeptide (Gln-Lys) (interchain with K-? in acceptor proteins)).

This sequence belongs to the prokaryotic ubiquitin-like protein family. In terms of assembly, strongly interacts with the proteasome-associated ATPase ARC through a hydrophobic interface; the interacting region of Pup lies in its C-terminal half. There is one Pup binding site per ARC hexamer ring. Post-translationally, is modified by deamidation of its C-terminal glutamine to glutamate by the deamidase Dop, a prerequisite to the subsequent pupylation process.

It participates in protein degradation; proteasomal Pup-dependent pathway. In terms of biological role, protein modifier that is covalently attached to lysine residues of substrate proteins, thereby targeting them for proteasomal degradation. The tagging system is termed pupylation. This chain is Prokaryotic ubiquitin-like protein Pup, found in Renibacterium salmoninarum (strain ATCC 33209 / DSM 20767 / JCM 11484 / NBRC 15589 / NCIMB 2235).